We begin with the raw amino-acid sequence, 354 residues long: 3-dehydroquinate synthase (354 aa).

NAD(+)-binding positions include Gly100–Asp104, Thr124–Thr125, Lys136, Lys145, and Phe163–Thr166. Residues Glu178, His242, and His256 each coordinate Zn(2+).

This sequence belongs to the sugar phosphate cyclases superfamily. Dehydroquinate synthase family. The cofactor is Co(2+). Zn(2+) serves as cofactor. Requires NAD(+) as cofactor.

Its subcellular location is the cytoplasm. It catalyses the reaction 7-phospho-2-dehydro-3-deoxy-D-arabino-heptonate = 3-dehydroquinate + phosphate. Its pathway is metabolic intermediate biosynthesis; chorismate biosynthesis; chorismate from D-erythrose 4-phosphate and phosphoenolpyruvate: step 2/7. In terms of biological role, catalyzes the conversion of 3-deoxy-D-arabino-heptulosonate 7-phosphate (DAHP) to dehydroquinate (DHQ). The polypeptide is 3-dehydroquinate synthase (Staphylococcus aureus (strain NCTC 8325 / PS 47)).